The primary structure comprises 485 residues: Glutamate mutase epsilon subunit (485 aa).

Residue arginine 100 participates in L-glutamate binding. Asparagine 123 contacts adenosylcob(III)alamin. Residues 149 to 150 (KH) and aspartate 171 each bind L-glutamate. Adenosylcob(III)alamin contacts are provided by proline 180, phenylalanine 297, lysine 326, and glutamate 330.

It belongs to the methylaspartate mutase GlmE subunit family. As to quaternary structure, heterotetramer composed of 2 epsilon subunits (GlmE) and 2 sigma subunits (GlmS). GlmE exists as a homodimer and GlmS as a monomer. The cofactor is adenosylcob(III)alamin.

The enzyme catalyses (2S,3S)-3-methyl-L-aspartate = L-glutamate. The protein operates within amino-acid degradation; L-glutamate degradation via mesaconate pathway; acetate and pyruvate from L-glutamate: step 1/4. Functionally, catalyzes the carbon skeleton rearrangement of L-glutamate to L-threo-3-methylaspartate ((2S,3S)-3-methylaspartate). The protein is Glutamate mutase epsilon subunit of Fusobacterium nucleatum subsp. nucleatum (strain ATCC 25586 / DSM 15643 / BCRC 10681 / CIP 101130 / JCM 8532 / KCTC 2640 / LMG 13131 / VPI 4355).